Consider the following 320-residue polypeptide: GTP 3',8-cyclase (320 aa).

The region spanning 4–227 (LYSRRINYMR…METEKSSPAK (224 aa)) is the Radical SAM core domain. R13 serves as a coordination point for GTP. [4Fe-4S] cluster is bound by residues C20 and C24. Y26 lines the S-adenosyl-L-methionine pocket. Position 27 (C27) interacts with [4Fe-4S] cluster. Residue R63 coordinates GTP. G67 contributes to the S-adenosyl-L-methionine binding site. Position 94 (T94) interacts with GTP. S118 is an S-adenosyl-L-methionine binding site. K155 contributes to the GTP binding site. Residue M189 participates in S-adenosyl-L-methionine binding. Residues C249 and C252 each contribute to the [4Fe-4S] cluster site. Position 254-256 (254-256 (RVR)) interacts with GTP. C266 contacts [4Fe-4S] cluster. Over residues 300–312 (KHDLLTDSHEESN) the composition is skewed to basic and acidic residues. Positions 300-320 (KHDLLTDSHEESNRGMSQIGG) are disordered.

This sequence belongs to the radical SAM superfamily. MoaA family. Monomer and homodimer. The cofactor is [4Fe-4S] cluster.

It catalyses the reaction GTP + AH2 + S-adenosyl-L-methionine = (8S)-3',8-cyclo-7,8-dihydroguanosine 5'-triphosphate + 5'-deoxyadenosine + L-methionine + A + H(+). The protein operates within cofactor biosynthesis; molybdopterin biosynthesis. Functionally, catalyzes the cyclization of GTP to (8S)-3',8-cyclo-7,8-dihydroguanosine 5'-triphosphate. The chain is GTP 3',8-cyclase from Alkaliphilus oremlandii (strain OhILAs) (Clostridium oremlandii (strain OhILAs)).